A 944-amino-acid chain; its full sequence is Bifunctional glutamine synthetase adenylyltransferase/adenylyl-removing enzyme (944 aa).

The adenylyl removase stretch occupies residues 1–440 (MSANSVFQQL…IFTQLIGEDD (440 aa)). The tract at residues 448–944 (VSEFKRLWLL…LSSKQKWLDE (497 aa)) is adenylyl transferase.

The protein belongs to the GlnE family. It depends on Mg(2+) as a cofactor.

It catalyses the reaction [glutamine synthetase]-O(4)-(5'-adenylyl)-L-tyrosine + phosphate = [glutamine synthetase]-L-tyrosine + ADP. The enzyme catalyses [glutamine synthetase]-L-tyrosine + ATP = [glutamine synthetase]-O(4)-(5'-adenylyl)-L-tyrosine + diphosphate. Its function is as follows. Involved in the regulation of glutamine synthetase GlnA, a key enzyme in the process to assimilate ammonia. When cellular nitrogen levels are high, the C-terminal adenylyl transferase (AT) inactivates GlnA by covalent transfer of an adenylyl group from ATP to specific tyrosine residue of GlnA, thus reducing its activity. Conversely, when nitrogen levels are low, the N-terminal adenylyl removase (AR) activates GlnA by removing the adenylyl group by phosphorolysis, increasing its activity. The regulatory region of GlnE binds the signal transduction protein PII (GlnB) which indicates the nitrogen status of the cell. The sequence is that of Bifunctional glutamine synthetase adenylyltransferase/adenylyl-removing enzyme from Proteus mirabilis (strain HI4320).